The sequence spans 33 residues: KVFERXELARTLKRLGLDGFRGVSLPNXVXLAR.

Belongs to the glycosyl hydrolase 22 family. Monomer.

It carries out the reaction Hydrolysis of (1-&gt;4)-beta-linkages between N-acetylmuramic acid and N-acetyl-D-glucosamine residues in a peptidoglycan and between N-acetyl-D-glucosamine residues in chitodextrins.. Functionally, lysozymes have primarily a bacteriolytic function; those in tissues and body fluids are associated with the monocyte-macrophage system and enhance the activity of immunoagents. This is Lysozyme C, spleen isozyme from Equus caballus (Horse).